A 413-amino-acid polypeptide reads, in one-letter code: 26S proteasome regulatory subunit 6B homolog (413 aa).

A disordered region spans residues 1–30; the sequence is MATAMVLDPKPAEKLPATRPETSITDVPSD. A coiled-coil region spans residues 32–80; it reads EDDLYARLKSLQRQLEFIEIQEEYVKDELKNLRREHLRAQEEVKRIQSV. An ATP-binding site is contributed by 201-208; the sequence is GPPGTGKT.

Belongs to the AAA ATPase family.

The protein resides in the cytoplasm. Its subcellular location is the nucleus. Its function is as follows. The 26S proteasome is involved in the ATP-dependent degradation of ubiquitinated proteins. The regulatory (or ATPase) complex confers ATP dependency and substrate specificity to the 26S complex. The chain is 26S proteasome regulatory subunit 6B homolog from Solanum tuberosum (Potato).